The primary structure comprises 137 residues: Large ribosomal subunit protein uL16 (137 aa).

It belongs to the universal ribosomal protein uL16 family. As to quaternary structure, part of the 50S ribosomal subunit.

In terms of biological role, binds 23S rRNA and is also seen to make contacts with the A and possibly P site tRNAs. This is Large ribosomal subunit protein uL16 from Acinetobacter baumannii (strain SDF).